Consider the following 119-residue polypeptide: Large ribosomal subunit protein bL12 (119 aa).

Belongs to the bacterial ribosomal protein bL12 family. As to quaternary structure, homodimer. Part of the ribosomal stalk of the 50S ribosomal subunit. Forms a multimeric L10(L12)X complex, where L10 forms an elongated spine to which 2 to 4 L12 dimers bind in a sequential fashion. Binds GTP-bound translation factors.

Functionally, forms part of the ribosomal stalk which helps the ribosome interact with GTP-bound translation factors. Is thus essential for accurate translation. This is Large ribosomal subunit protein bL12 from Colwellia psychrerythraea (strain 34H / ATCC BAA-681) (Vibrio psychroerythus).